The following is a 265-amino-acid chain: Hydroxyethylthiazole kinase 2 (265 aa).

Residue M39 coordinates substrate. ATP contacts are provided by K115 and T168. G195 is a substrate binding site.

This sequence belongs to the Thz kinase family. Mg(2+) is required as a cofactor.

It catalyses the reaction 5-(2-hydroxyethyl)-4-methylthiazole + ATP = 4-methyl-5-(2-phosphooxyethyl)-thiazole + ADP + H(+). It participates in cofactor biosynthesis; thiamine diphosphate biosynthesis; 4-methyl-5-(2-phosphoethyl)-thiazole from 5-(2-hydroxyethyl)-4-methylthiazole: step 1/1. In terms of biological role, catalyzes the phosphorylation of the hydroxyl group of 4-methyl-5-beta-hydroxyethylthiazole (THZ). The chain is Hydroxyethylthiazole kinase 2 from Clostridium botulinum (strain ATCC 19397 / Type A).